Reading from the N-terminus, the 347-residue chain is GMP reductase (347 aa).

Residue 108 to 131 coordinates NADP(+); sequence ADFEKTVQILALNPALNFVCIDVA. Residues glycine 181 and glycine 183 each coordinate K(+). Cysteine 186 (thioimidate intermediate) is an active-site residue. 216–239 is a binding site for NADP(+); it reads IVSDGGCTMPGDVAKAFGGGADFV.

It belongs to the IMPDH/GMPR family. GuaC type 1 subfamily. As to quaternary structure, homotetramer.

The enzyme catalyses IMP + NH4(+) + NADP(+) = GMP + NADPH + 2 H(+). In terms of biological role, catalyzes the irreversible NADPH-dependent deamination of GMP to IMP. It functions in the conversion of nucleobase, nucleoside and nucleotide derivatives of G to A nucleotides, and in maintaining the intracellular balance of A and G nucleotides. This chain is GMP reductase, found in Salmonella choleraesuis (strain SC-B67).